Reading from the N-terminus, the 1115-residue chain is Calcium-transporting ATPase PAT1 (1115 aa).

Over 1–99 (MTGSHEMESI…SIVLDALSDH (99 aa)) the chain is Stromal. Residues 100–120 (ILILLIVAAVVSIVLGSIDYT) traverse the membrane as a helical segment. The Lumenal portion of the chain corresponds to 121-126 (SDHPET). The helical transmembrane segment at 127-147 (GWIDGVAILVAVILVVGITSL) threads the bilayer. At 148 to 235 (NDFKNQARFR…KGQPQDNMDP (88 aa)) the chain is on the stromal side. Residues 236-256 (FLISGSMVIEGFGTMLVTAVG) traverse the membrane as a helical segment. Residues 257–287 (VNSFNGKTMMGLRVASEDTPLQMKLSVLASR) lie on the Lumenal side of the membrane. The chain crosses the membrane as a helical span at residues 288–308 (IGYFGMGAAILMLLIAIPKYF). Residues 309–328 (IQRKVHDIEITREDAQPIVQ) lie on the Stromal side of the membrane. A helical membrane pass occupies residues 329–349 (LVISAITIVVVAVPEGLPLAV). Topologically, residues 350–735 (TMALAYGMMK…GRNIYDAICK (386 aa)) are lumenal. The active-site 4-aspartylphosphate intermediate is Asp-385. Asp-678 and Asp-682 together coordinate Mg(2+). A helical membrane pass occupies residues 736 to 756 (FLQFQLTVNVVAVTVAFIGTL). Over 757–832 (TSDVVEDKDN…GKNAPLITRS (76 aa)) the chain is Stromal. Residues 762-784 (EDKDNSSSSGSADKVTEEEPRQG) form a disordered region. A helical membrane pass occupies residues 833-853 (MWKNIIGQAALQLAILFTILY). Topologically, residues 854–873 (QGHNIFQHFVPQAHGPIIKN) are lumenal. Residues 874 to 894 (GLHHYTLVFNCFVFLQLFNEI) traverse the membrane as a helical segment. Over 895–913 (NARVLGSRTNPFKNFFNNP) the chain is Stromal. The chain crosses the membrane as a helical span at residues 914 to 934 (IFIAVMIFTLGVQIIFVTFGG). At 935–943 (SATSTDSLY) the chain is on the lumenal side. The chain crosses the membrane as a helical span at residues 944–964 (IVEWICCVVVGAISLPVGLLL). The Stromal segment spans residues 965–1115 (RKIPIREPVV…LHLPVNQINN (151 aa)). Positions 984-1056 (AVYTSPSPNP…IPSSSSNLVN (73 aa)) are disordered. A compositionally biased stretch (low complexity) spans 1040–1053 (NDNINTPIPSSSSN).

Belongs to the cation transport ATPase (P-type) (TC 3.A.3) family. Type IIB subfamily.

It is found in the contractile vacuole membrane. It localises to the cell membrane. The enzyme catalyses Ca(2+)(in) + ATP + H2O = Ca(2+)(out) + ADP + phosphate + H(+). Calcium ATPase involved in Ca(2+) homeostasis as a component of the contractile vacuole complex. The chain is Calcium-transporting ATPase PAT1 (patA) from Dictyostelium discoideum (Social amoeba).